The following is a 339-amino-acid chain: Retroviral-like aspartic protease 1 (339 aa).

A propeptide spanning residues 1–188 is cleaved from the precursor; sequence MRNPGGPGWA…SEPEEILFAN (188 aa). A disordered region spans residues 34–53; that stretch reads VPAPFNSSRQGKNTAQPTEP. A compositionally biased stretch (polar residues) spans 38-53; the sequence is FNSSRQGKNTAQPTEP. Asn-39 carries N-linked (GlcNAc...) asparagine glycosylation. The chain crosses the membrane as a helical span at residues 55 to 75; that stretch reads LSSVIAPTLFCAFLYLACVTA. The 82-residue stretch at 205–286 folds into the Peptidase A2 domain; it reads VRFLVDSGAQ…AEEAIIGTDV (82 aa). Asp-210 is a catalytic residue. N-linked (GlcNAc...) asparagine glycosylation is present at Asn-274. The propeptide occupies 325–339; sequence LIEEEEGSSAPEGSH.

As to quaternary structure, homodimer. Undergoes autocleavage which is necessary for activation of the protein. In terms of tissue distribution, highly expressed in stratified epithelia in skin, tongue, esophagus, forestomach and vagina. Also expressed in trachea, urinary bladder and thymus. Undetectable in simple epithelia. Within the epidermis, expressed exclusively in the granular layer (at protein level). Levels are elevated in benign skin tumors but are down-regulated in squamous cell carcinomas.

It localises to the membrane. Functionally, protease responsible for filaggrin processing, essential for the maintenance of a proper epidermis organization. The protein is Retroviral-like aspartic protease 1 of Mus musculus (Mouse).